The chain runs to 240 residues: MKITILSLFPSIITPFFENSIMKKVVDKGIISYEVISIRDFSKDKHKRCDDVPYGGGAGMVLKVQPIVDALEYVNANSKTTIFVSPSGLKYTQKLAYDLSKKDELVIICGRYEGLDQRVIDLYVDLEISVGDYVLSSGEVAALVIIDSVYRLLDGVINPNSLCEESFSFECGLLEYPHYTRPYEFRNLKVPDVLLSGHHEEIKKWRLVKSVEKTKKNRFDLYLKYLEMRGEKNDGFDKKN.

S-adenosyl-L-methionine-binding positions include glycine 110 and 130–135 (VGDYVL).

Belongs to the RNA methyltransferase TrmD family. Homodimer.

It is found in the cytoplasm. It carries out the reaction guanosine(37) in tRNA + S-adenosyl-L-methionine = N(1)-methylguanosine(37) in tRNA + S-adenosyl-L-homocysteine + H(+). Specifically methylates guanosine-37 in various tRNAs. The chain is tRNA (guanine-N(1)-)-methyltransferase from Borrelia recurrentis (strain A1).